The sequence spans 452 residues: CUGBP Elav-like family member 3 (452 aa).

RRM domains follow at residues 7-88, 94-174, and 367-445; these read IKLF…PADS, RKLF…FADT, and CNIF…LKRP.

The protein belongs to the CELF/BRUNOL family.

It localises to the nucleus. The protein resides in the cytoplasm. In terms of biological role, RNA-binding protein that may be involved in the regulation of pre-mRNA alternative splicing. The protein is CUGBP Elav-like family member 3 (celf3) of Danio rerio (Zebrafish).